Reading from the N-terminus, the 376-residue chain is Chaperone protein DnaJ 2 (376 aa).

The region spanning 8–72 (DYYEILGVPR…EKRKLYDMYG (65 aa)) is the J domain. The segment at 143–219 (GTTVPIEVER…CTGRGYGLVK (77 aa)) adopts a CR-type zinc-finger fold. Zn(2+) contacts are provided by Cys-156, Cys-159, Cys-172, Cys-175, Cys-194, Cys-197, Cys-207, and Cys-210. CXXCXGXG motif repeat units lie at residues 156-163 (CSACGGTG), 172-179 (CPTCGGRG), 194-201 (CPTCGGEG), and 207-214 (CHACTGRG).

This sequence belongs to the DnaJ family. As to quaternary structure, homodimer. It depends on Zn(2+) as a cofactor.

It is found in the cytoplasm. Its function is as follows. Participates actively in the response to hyperosmotic and heat shock by preventing the aggregation of stress-denatured proteins and by disaggregating proteins, also in an autonomous, DnaK-independent fashion. Unfolded proteins bind initially to DnaJ; upon interaction with the DnaJ-bound protein, DnaK hydrolyzes its bound ATP, resulting in the formation of a stable complex. GrpE releases ADP from DnaK; ATP binding to DnaK triggers the release of the substrate protein, thus completing the reaction cycle. Several rounds of ATP-dependent interactions between DnaJ, DnaK and GrpE are required for fully efficient folding. Also involved, together with DnaK and GrpE, in the DNA replication of plasmids through activation of initiation proteins. The sequence is that of Chaperone protein DnaJ 2 from Aquifex aeolicus (strain VF5).